The following is a 537-amino-acid chain: Sodium/hydrogen exchanger 9B2 (537 aa).

The segment covering 1–10 (MGDEDKRITY) has biased composition (basic and acidic residues). Residues 1–33 (MGDEDKRITYEDSEPSTGMNYTPSMHQETQEET) are disordered. Residues 1-86 (MGDEDKRITY…ACPPHGLLDR (86 aa)) are Cytoplasmic-facing. Polar residues predominate over residues 15-27 (PSTGMNYTPSMHQ). At serine 49 the chain carries Phosphoserine. Residues 87–104 (VVTNVTIIVLLWAVIWSI) form a helical membrane-spanning segment. At 105 to 113 (TGSECLPGG) the chain is on the extracellular side. A helical membrane pass occupies residues 114 to 133 (NLFGIIILFYCAIIGGKLLG). Topologically, residues 134–144 (LIKLPTLPPLP) are cytoplasmic. Residues 145-161 (SLLGMLLAGFLIRNIPV) traverse the membrane as a helical segment. The Extracellular portion of the chain corresponds to 162–171 (INDNVQIKHK). The chain crosses the membrane as a helical span at residues 172 to 189 (WSSSLRSIALSIILVRAG). The Cytoplasmic segment spans residues 190–200 (LGLDSKALKKL). The chain crosses the membrane as a helical span at residues 201–227 (KGVCVRLSMGPCIVEACTSALLAHYLL). Residues 228–233 (GLPWQW) are Extracellular-facing. A helical membrane pass occupies residues 234–242 (GFILGFVLG). The Cytoplasmic segment spans residues 243–270 (AVSPAVVVPSMLLLQGGGYGVEKGVPTL). Positions 244, 275, 278, and 279 each coordinate Na(+). Residues 271-290 (LMAAGSFDDILAITGFNTCL) traverse the membrane as a helical segment. At 291-300 (GIAFSTGSTV) the chain is on the extracellular side. The helical transmembrane segment at 301-324 (FNVLRGVLEVVIGVATGSVLGFFI) threads the bilayer. Topologically, residues 325 to 339 (QYFPSCDQDKLVCKR) are cytoplasmic. The helical transmembrane segment at 340-357 (TFLVLGLSVLAVFSSVHF) threads the bilayer. Residues 358-361 (GFPG) are Extracellular-facing. The chain crosses the membrane as a helical span at residues 362–373 (SGGLCTLVMAFL). The Cytoplasmic portion of the chain corresponds to 374 to 390 (AGMGWTSEKAEVEKIIA). Residues 391-411 (VAWDIFQPLLFGLIGAEVSIA) traverse the membrane as a helical segment. Residues 412–417 (SLRPET) are Extracellular-facing. Residues 418–440 (VGLCVATVGIAVLIRILTTFLMV) traverse the membrane as a helical segment. Topologically, residues 441 to 461 (CFAGFNLKEKIFISFAWLPKA) are cytoplasmic. Residues 462 to 473 (TVQAAIGSVALD) form a helical membrane-spanning segment. At 474 to 486 (TARSHGEKQLEDY) the chain is on the extracellular side. A helical membrane pass occupies residues 487 to 509 (GMDVLTVAFLSILITAPIGSLLI). Residues 510 to 537 (GLLGPRLLQKVEHQNKDEEVQGETSVQV) lie on the Cytoplasmic side of the membrane.

It belongs to the monovalent cation:proton antiporter 1 (CPA1) transporter (TC 2.A.36) family. In terms of assembly, homodimer; dimerization is essential for SLC9B2 activity. Lipids seem to play a role in the stabilization of the dimerization subdomain.

Its subcellular location is the cell membrane. It is found in the mitochondrion membrane. It localises to the endosome membrane. The protein localises to the recycling endosome membrane. The protein resides in the cytoplasmic vesicle. Its subcellular location is the secretory vesicle. It is found in the synaptic vesicle membrane. It localises to the basolateral cell membrane. The protein localises to the apical cell membrane. The catalysed reaction is Li(+)(out) + H(+)(in) = Li(+)(in) + H(+)(out). The enzyme catalyses Li(+)(in) + Na(+)(out) = Li(+)(out) + Na(+)(in). It catalyses the reaction Na(+)(in) + H(+)(out) = Na(+)(out) + H(+)(in). Its activity is regulated as follows. Allosterically inhibited by the N-terminal domain. Inhibited by phloretin. In terms of biological role, electroneutral Na(+) Li(+)/H(+) antiporter that extrudes Na(+) or Li(+) in exchange for external protons across the membrane. Uses the proton gradient/membrane potential to extrude sodium. Contributes to the regulation of intracellular pH and sodium homeostasis. Also able to mediate Na(+)/Li(+) antiporter activity in kidney. May play a physiological role in renal tubular function and blood pressure homeostasis. Plays an important role for insulin secretion and clathrin-mediated endocytosis in beta-cells. Involved in sperm motility and fertility. It is controversial whether SLC9B2 plays a role in osteoclast differentiation or not. The polypeptide is Sodium/hydrogen exchanger 9B2 (SLC9B2) (Pongo abelii (Sumatran orangutan)).